We begin with the raw amino-acid sequence, 397 residues long: CCA-adding enzyme (397 aa).

ATP is bound by residues G8 and R11. Residues G8 and R11 each contribute to the CTP site. E21 and D23 together coordinate Mg(2+). 3 residues coordinate ATP: R91, R137, and R140. CTP is bound by residues R91, R137, and R140. Positions 213–324 (NLDAAIATLK…LALFNGCDAW (112 aa)) constitute an HD domain.

It belongs to the tRNA nucleotidyltransferase/poly(A) polymerase family. Bacterial CCA-adding enzyme type 2 subfamily. The cofactor is Mg(2+).

The enzyme catalyses a tRNA precursor + 2 CTP + ATP = a tRNA with a 3' CCA end + 3 diphosphate. It carries out the reaction a tRNA with a 3' CCA end + 2 CTP + ATP = a tRNA with a 3' CCACCA end + 3 diphosphate. Functionally, catalyzes the addition and repair of the essential 3'-terminal CCA sequence in tRNAs without using a nucleic acid template. Adds these three nucleotides in the order of C, C, and A to the tRNA nucleotide-73, using CTP and ATP as substrates and producing inorganic pyrophosphate. tRNA 3'-terminal CCA addition is required both for tRNA processing and repair. Also involved in tRNA surveillance by mediating tandem CCA addition to generate a CCACCA at the 3' terminus of unstable tRNAs. While stable tRNAs receive only 3'-terminal CCA, unstable tRNAs are marked with CCACCA and rapidly degraded. The protein is CCA-adding enzyme of Alteromonas mediterranea (strain DSM 17117 / CIP 110805 / LMG 28347 / Deep ecotype).